The primary structure comprises 382 residues: 3-ketosteroid-9-alpha-monooxygenase, oxygenase component (382 aa).

Residues 20–122 (WHCLGLSRTF…TMEKHGQLFV (103 aa)) enclose the Rieske domain. Positions 61, 63, 80, and 83 each coordinate [2Fe-2S] cluster. 4 residues coordinate Fe cation: Asn169, His175, His180, and Asp298.

Homotrimer. The two-component system 3-ketosteroid-9-alpha-monooxygenase is composed of an oxygenase component KshA and a reductase component KshB. It depends on [2Fe-2S] cluster as a cofactor. Fe cation serves as cofactor.

The enzyme catalyses androsta-1,4-diene-3,17-dione + 2 reduced [2Fe-2S]-[ferredoxin] + O2 + 2 H(+) = 9alpha-hydroxyandrosta-1,4-diene-3,17-dione + 2 oxidized [2Fe-2S]-[ferredoxin] + H2O. Functionally, in vitro, catalyzes the introduction of a 9alpha-hydroxyl moiety into the ring B of 3-ketosteroid substrates such as 1,4-androstadiene-3,17-dione (ADD), 4-androstene-3,17-dione (AD), 4-androstene-17beta-ol-3-one (testosterone), 4-pregnene-3,20-dione (progesterone), 23,24-bisnorcholesta-4-ene-22-oate and 23,24-bisnorcholesta-1,4-diene-22-oate. The protein is 3-ketosteroid-9-alpha-monooxygenase, oxygenase component of Rhodococcus rhodochrous.